The sequence spans 63 residues: MPKMKTKSGATKRFKKTATGFKHKQSFTSHILTKKSPKRKRQLRGTKLIAKSDVASIKRMTAC.

Residues 1-22 (MPKMKTKSGATKRFKKTATGFK) are disordered.

This sequence belongs to the bacterial ribosomal protein bL35 family.

This chain is Large ribosomal subunit protein bL35, found in Marinobacter nauticus (strain ATCC 700491 / DSM 11845 / VT8) (Marinobacter aquaeolei).